The chain runs to 290 residues: 4-diphosphocytidyl-2-C-methyl-D-erythritol kinase (290 aa).

Lys-13 is a catalytic residue. Residue 96-106 participates in ATP binding; that stretch reads PMGGGIGGGSS. Residue Asp-138 is part of the active site.

This sequence belongs to the GHMP kinase family. IspE subfamily.

It catalyses the reaction 4-CDP-2-C-methyl-D-erythritol + ATP = 4-CDP-2-C-methyl-D-erythritol 2-phosphate + ADP + H(+). It functions in the pathway isoprenoid biosynthesis; isopentenyl diphosphate biosynthesis via DXP pathway; isopentenyl diphosphate from 1-deoxy-D-xylulose 5-phosphate: step 3/6. Its function is as follows. Catalyzes the phosphorylation of the position 2 hydroxy group of 4-diphosphocytidyl-2C-methyl-D-erythritol. In Vibrio vulnificus (strain CMCP6), this protein is 4-diphosphocytidyl-2-C-methyl-D-erythritol kinase.